The sequence spans 347 residues: Palmitoyltransferase ZDHHC11 (347 aa).

The Cytoplasmic segment spans residues methionine 1 to alanine 46. The helical transmembrane segment at isoleucine 47–leucine 67 threads the bilayer. The Lumenal segment spans residues proline 68 to alanine 75. Residues asparagine 76–isoleucine 96 traverse the membrane as a helical segment. Over aspartate 97–tyrosine 170 the chain is Cytoplasmic. Positions glutamine 128–alanine 178 constitute a DHHC domain. Catalysis depends on cysteine 158, which acts as the S-palmitoyl cysteine intermediate. Residues tryptophan 171–leucine 191 traverse the membrane as a helical segment. Residues cysteine 192–proline 234 lie on the Lumenal side of the membrane. The chain crosses the membrane as a helical span at residues isoleucine 235–glycine 255. At histidine 256 to aspartate 347 the chain is on the cytoplasmic side. The segment covering glutamate 291–aspartate 306 has biased composition (basic and acidic residues). The segment at glutamate 291 to serine 332 is disordered. The segment covering phenylalanine 322–serine 331 has biased composition (polar residues).

This sequence belongs to the DHHC palmitoyltransferase family. Interacts with IRF3 and STING1; in presence of DNA viruses recruits IRF3 to STING1 promoting IRF3 phosphorylation and activation.

The protein resides in the endosome membrane. The catalysed reaction is L-cysteinyl-[protein] + hexadecanoyl-CoA = S-hexadecanoyl-L-cysteinyl-[protein] + CoA. Its function is as follows. Endoplasmic reticulum-localized palmitoyltransferase that could catalyze the addition of palmitate onto various protein substrates and be involved in a variety of cellular processes. Has a palmitoyltransferase activity toward NCDN and regulates NCDN association with endosome membranes through this palmitoylation. May play a role in cell proliferation. Also has a palmitoyltransferase activity-independent function in DNA virus-triggered and CGAS-mediated innate immune response. Functions as an adapter that recruits IRF3 to STING1 to promote the activation of that key transcriptional regulator of type I interferon (IFN)-dependent immune response. This Mus musculus (Mouse) protein is Palmitoyltransferase ZDHHC11.